A 137-amino-acid chain; its full sequence is Cellular retinoic acid-binding protein 1 (137 aa).

Positions 21-31 (RALGVNAMLRK) match the Nuclear localization signal motif. 132–134 (RIY) contributes to the all-trans-retinoate binding site.

Belongs to the calycin superfamily. Fatty-acid binding protein (FABP) family.

Its subcellular location is the cytoplasm. Functionally, cytosolic CRABPs may regulate the access of retinoic acid to the nuclear retinoic acid receptors. In Pelodiscus sinensis (Chinese softshell turtle), this protein is Cellular retinoic acid-binding protein 1 (CRABP1).